The sequence spans 66 residues: uncharacterized protein (66 aa).

Residues Trp-32 to Arg-49 form a helical membrane-spanning segment.

Its subcellular location is the membrane. This is an uncharacterized protein from Bacillus subtilis (strain 168).